Here is a 444-residue protein sequence, read N- to C-terminus: Phosphoglucosamine mutase (444 aa).

Serine 102 serves as the catalytic Phosphoserine intermediate. 4 residues coordinate Mg(2+): serine 102, aspartate 241, aspartate 243, and aspartate 245. Serine 102 is modified (phosphoserine).

It belongs to the phosphohexose mutase family. The cofactor is Mg(2+). In terms of processing, activated by phosphorylation.

The enzyme catalyses alpha-D-glucosamine 1-phosphate = D-glucosamine 6-phosphate. Its function is as follows. Catalyzes the conversion of glucosamine-6-phosphate to glucosamine-1-phosphate. The chain is Phosphoglucosamine mutase from Actinobacillus pleuropneumoniae serotype 5b (strain L20).